A 306-amino-acid chain; its full sequence is Phenylcoumaran benzylic ether reductase POP1 (306 aa).

NADP(+)-binding positions include 9 to 15 (GGTGYIG), Arg-34, and Lys-43. The active-site Proton acceptor is the Lys-131. Arg-135 is an NADP(+) binding site.

Belongs to the NmrA-type oxidoreductase family. Isoflavone reductase subfamily.

It carries out the reaction (-)-dehydrodiconiferyl alcohol + NADPH + H(+) = (S)-isodihydrodehydrodiconiferyl alcohol + NADP(+). It catalyses the reaction (+)-dehydrodiconiferyl alcohol + NADPH + H(+) = (R)-isodihydrodehydrodiconiferyl alcohol + NADP(+). The enzyme catalyses (2R,3S)-dihydrodehydrodiconiferyl alcohol + NADPH + H(+) = (S)-tetrahydrodehydrodiconiferyl alcohol + NADP(+). The catalysed reaction is (2S,3R)-dihydrodehydrodiconiferyl alcohol + NADPH + H(+) = (R)-tetrahydrodehydrodiconiferyl alcohol + NADP(+). In terms of biological role, oxidoreductase involved in lignan biosynthesis. Catalyzes the NADPH-dependent reduction of phenylcoumaran benzylic ethers. Converts dehydrodiconiferyl alcohol (DDC) to isodihydrodehydrodiconiferyl alcohol (IDDDC), and dihydrodehydrodiconiferyl alcohol (DDDC) to tetrahydrodehydrodiconiferyl alcohol (TDDC). In Populus trichocarpa (Western balsam poplar), this protein is Phenylcoumaran benzylic ether reductase POP1.